The primary structure comprises 145 residues: UPF0260 protein VV2402 (145 aa).

Belongs to the UPF0260 family.

This Vibrio vulnificus (strain YJ016) protein is UPF0260 protein VV2402.